Consider the following 205-residue polypeptide: Large ribosomal subunit protein uL4 (205 aa).

Positions 45 to 97 are disordered; it reads RQGTSAVKNRSAVRGGGKKPWRQKGTGRARQGSIRAPQWRGGGTVFGPTPRSY. Basic residues predominate over residues 60 to 71; it reads GGKKPWRQKGTG.

Belongs to the universal ribosomal protein uL4 family. Part of the 50S ribosomal subunit.

In terms of biological role, one of the primary rRNA binding proteins, this protein initially binds near the 5'-end of the 23S rRNA. It is important during the early stages of 50S assembly. It makes multiple contacts with different domains of the 23S rRNA in the assembled 50S subunit and ribosome. Its function is as follows. Forms part of the polypeptide exit tunnel. In Lactobacillus gasseri (strain ATCC 33323 / DSM 20243 / BCRC 14619 / CIP 102991 / JCM 1131 / KCTC 3163 / NCIMB 11718 / NCTC 13722 / AM63), this protein is Large ribosomal subunit protein uL4.